We begin with the raw amino-acid sequence, 431 residues long: Adenylosuccinate synthetase (431 aa).

Residues 12–18 (GDEGKGK) and 40–42 (GHT) each bind GTP. Aspartate 13 (proton acceptor) is an active-site residue. The Mg(2+) site is built by aspartate 13 and glycine 40. Residues 13 to 16 (DEGK), 38 to 41 (NAGH), threonine 131, arginine 145, glutamine 225, threonine 240, and arginine 304 each bind IMP. Histidine 41 (proton donor) is an active-site residue. 300–306 (TTTGRKR) contributes to the substrate binding site. GTP contacts are provided by residues arginine 306, 332–334 (KLD), and 414–416 (STS).

It belongs to the adenylosuccinate synthetase family. In terms of assembly, homodimer. Requires Mg(2+) as cofactor.

It localises to the cytoplasm. The enzyme catalyses IMP + L-aspartate + GTP = N(6)-(1,2-dicarboxyethyl)-AMP + GDP + phosphate + 2 H(+). It participates in purine metabolism; AMP biosynthesis via de novo pathway; AMP from IMP: step 1/2. Its function is as follows. Plays an important role in the de novo pathway of purine nucleotide biosynthesis. Catalyzes the first committed step in the biosynthesis of AMP from IMP. The protein is Adenylosuccinate synthetase of Dinoroseobacter shibae (strain DSM 16493 / NCIMB 14021 / DFL 12).